A 527-amino-acid polypeptide reads, in one-letter code: Coproporphyrinogen III oxidase (527 aa).

The segment covering Met1–Val14 has biased composition (low complexity). Residues Met1 to Asp23 are disordered. Residues Gly33–Gly38, Glu56–Ser57, Lys64, and Gly78–Ser81 each bind FAD. Positions Arg231–Ser267 are disordered. Residues Gln236–Ser252 are compositionally biased toward low complexity. Residues Val300, Trp448, and Val487 to Leu489 contribute to the FAD site.

Belongs to the protoporphyrinogen/coproporphyrinogen oxidase family. Coproporphyrinogen III oxidase subfamily. Requires FAD as cofactor.

It is found in the cytoplasm. The catalysed reaction is coproporphyrinogen III + 3 O2 = coproporphyrin III + 3 H2O2. It participates in porphyrin-containing compound metabolism; protoheme biosynthesis. In terms of biological role, involved in coproporphyrin-dependent heme b biosynthesis. Catalyzes the oxidation of coproporphyrinogen III to coproporphyrin III. The protein is Coproporphyrinogen III oxidase of Propionibacterium freudenreichii subsp. freudenreichii.